We begin with the raw amino-acid sequence, 344 residues long: N-acetyl-gamma-glutamyl-phosphate reductase (344 aa).

The active site involves C150.

Belongs to the NAGSA dehydrogenase family. Type 1 subfamily.

It is found in the cytoplasm. The catalysed reaction is N-acetyl-L-glutamate 5-semialdehyde + phosphate + NADP(+) = N-acetyl-L-glutamyl 5-phosphate + NADPH + H(+). It participates in amino-acid biosynthesis; L-arginine biosynthesis; N(2)-acetyl-L-ornithine from L-glutamate: step 3/4. Catalyzes the NADPH-dependent reduction of N-acetyl-5-glutamyl phosphate to yield N-acetyl-L-glutamate 5-semialdehyde. The polypeptide is N-acetyl-gamma-glutamyl-phosphate reductase (Pseudomonas savastanoi pv. phaseolicola (strain 1448A / Race 6) (Pseudomonas syringae pv. phaseolicola (strain 1448A / Race 6))).